The primary structure comprises 121 residues: MQHYLLDSNQRLNVSFSKDSVAAYYHCFNQPYSKEVPPLMCASLWSKFDLFKKYANSELILTKSVINQTQKIKVDTIYVGHLEDIECRQIRNITRYTMALTLTKNDQHVITVTQTFIKAMK.

The protein is Protein VraC (vraC) of Staphylococcus aureus (strain MRSA252).